A 483-amino-acid polypeptide reads, in one-letter code: Myocilin (483 aa).

Positions 1 to 18 (MPTAQLLLLACLLWGLEA) are cleaved as a signal peptide. A glycan (N-linked (GlcNAc...) asparagine) is linked at asparagine 43. The stretch at 51-162 (GQAMSAIQDL…SQEVARLRRG (112 aa)) forms a coiled coil. Residues 153 to 179 (SQEVARLRRGQCPQAHSSSQDVPAGSR) are disordered. The 260-residue stretch at 223-482 (GCGELVWVGE…MVTYDIRLSK (260 aa)) folds into the Olfactomedin-like domain. An intrachain disulfide couples cysteine 224 to cysteine 412. Aspartate 359, asparagine 407, alanine 408, isoleucine 456, and aspartate 457 together coordinate Ca(2+). Residues 481 to 483 (SKM) carry the Microbody targeting signal motif.

In terms of assembly, homodimer (via N-terminus). Can also form higher oligomers. Interacts with OLFM3, FN1, NRCAM, GLDN and NFASC. Interacts (via N-terminus) with MYL2. Interacts with SFRP1, FRZB, FZD7, FZD10, FZD1 and WIF1; regulates Wnt signaling. Interacts with SNTA1; regulates muscle hypertrophy. Interacts with ERBB2 and ERBB3; activates ERBB2-ERBB3 signaling pathway. Interacts with SNCG; affects its secretion and its aggregation. N-glycosylated. In terms of processing, palmitoylated. Post-translationally, undergoes a calcium-dependent proteolytic cleavage at Arg-205 by CAPN2 in the endoplasmic reticulum. The result is the production of two fragments, one of 35 kDa containing the C-terminal olfactomedin-like domain, and another of 20 kDa containing the N-terminal leucine zipper-like domain. Expressed in optic nerve head, ciliary body and retina.

The protein localises to the secreted. It is found in the golgi apparatus. It localises to the cytoplasmic vesicle. The protein resides in the extracellular space. Its subcellular location is the extracellular matrix. The protein localises to the extracellular exosome. It is found in the mitochondrion. It localises to the mitochondrion intermembrane space. The protein resides in the mitochondrion inner membrane. Its subcellular location is the mitochondrion outer membrane. The protein localises to the rough endoplasmic reticulum. It is found in the cell projection. It localises to the cilium. The protein resides in the endoplasmic reticulum. Its function is as follows. Secreted glycoprotein regulating the activation of different signaling pathways in adjacent cells to control different processes including cell adhesion, cell-matrix adhesion, cytoskeleton organization and cell migration. Promotes substrate adhesion, spreading and formation of focal contacts. Negatively regulates cell-matrix adhesion and stress fiber assembly through Rho protein signal transduction. Modulates the organization of actin cytoskeleton by stimulating the formation of stress fibers through interactions with components of Wnt signaling pathways. Promotes cell migration through activation of PTK2 and the downstream phosphatidylinositol 3-kinase signaling. Plays a role in bone formation and promotes osteoblast differentiation in a dose-dependent manner through mitogen-activated protein kinase signaling. Mediates myelination in the peripheral nervous system through ERBB2/ERBB3 signaling. Plays a role as a regulator of muscle hypertrophy through the components of dystrophin-associated protein complex. Involved in positive regulation of mitochondrial depolarization. Plays a role in neurite outgrowth. May participate in the obstruction of fluid outflow in the trabecular meshwork. This chain is Myocilin (MYOC), found in Canis lupus familiaris (Dog).